A 555-amino-acid polypeptide reads, in one-letter code: Formate--tetrahydrofolate ligase (555 aa).

65-72 serves as a coordination point for ATP; that stretch reads TPAGEGKT.

The protein belongs to the formate--tetrahydrofolate ligase family.

The catalysed reaction is (6S)-5,6,7,8-tetrahydrofolate + formate + ATP = (6R)-10-formyltetrahydrofolate + ADP + phosphate. It functions in the pathway one-carbon metabolism; tetrahydrofolate interconversion. The polypeptide is Formate--tetrahydrofolate ligase (Thermoanaerobacter pseudethanolicus (strain ATCC 33223 / 39E) (Clostridium thermohydrosulfuricum)).